The following is a 294-amino-acid chain: MTLFLAGPTGSGKSAVAVELAEMLDAEIVSSDAYQVYRELPILTAAPSPADRERVPHHMVSIIPVQKNWNATEHYHRAMRCMEEIHARGKIAIVTGGSGLYFKFLSHGLSEAPPGDAALRAAFANCSTEALYARLSSLDPEGAASTDASNRRYVERNLEIVLAGGKPLSFWKRNWLTPPRGPGWVISRDVPELDERIAHRAARMMQEGAVEETASLGPCSATAERTLGLALIRSMLRGEISRENCQGQLALATRQYAKRQRTWLKREQWLRKLPASPSDSPRALAERIMEELGH.

7 to 14 (GPTGSGKS) contributes to the ATP binding site. 9–14 (TGSGKS) provides a ligand contact to substrate.

The protein belongs to the IPP transferase family. In terms of assembly, monomer. The cofactor is Mg(2+).

The catalysed reaction is adenosine(37) in tRNA + dimethylallyl diphosphate = N(6)-dimethylallyladenosine(37) in tRNA + diphosphate. In terms of biological role, catalyzes the transfer of a dimethylallyl group onto the adenine at position 37 in tRNAs that read codons beginning with uridine, leading to the formation of N6-(dimethylallyl)adenosine (i(6)A). In Akkermansia muciniphila (strain ATCC BAA-835 / DSM 22959 / JCM 33894 / BCRC 81048 / CCUG 64013 / CIP 107961 / Muc), this protein is tRNA dimethylallyltransferase.